The following is a 101-amino-acid chain: Small ribosomal subunit protein bS6 (101 aa).

It belongs to the bacterial ribosomal protein bS6 family.

Binds together with bS18 to 16S ribosomal RNA. The sequence is that of Small ribosomal subunit protein bS6 from Paenarthrobacter aurescens (strain TC1).